Reading from the N-terminus, the 358-residue chain is Peptide chain release factor 1 (358 aa).

Gln233 is modified (N5-methylglutamine).

Belongs to the prokaryotic/mitochondrial release factor family. Methylated by PrmC. Methylation increases the termination efficiency of RF1.

The protein resides in the cytoplasm. Functionally, peptide chain release factor 1 directs the termination of translation in response to the peptide chain termination codons UAG and UAA. This Staphylococcus haemolyticus (strain JCSC1435) protein is Peptide chain release factor 1.